The chain runs to 1030 residues: Importin beta-like SAD2 homolog (1030 aa).

An N-acetylmethionine modification is found at Met1. Residues 25–99 (AEQSLNQLQH…RNQILVFVSQ (75 aa)) form the Importin N-terminal domain. Disordered regions lie at residues 886-928 (AAKA…GSTL) and 940-964 (SYSDDDDFSDDDFSDDEELESPIDE). Acidic residues-rich tracts occupy residues 890–924 (EEEEEDEDGDDDDMDEFQTDDEDEDGDDENPDETD) and 943–964 (DDDDFSDDDFSDDEELESPIDE).

Belongs to the importin beta family.

It localises to the cytoplasm. The protein localises to the nucleus. Its function is as follows. Functions probably in nuclear protein import, either by acting as autonomous nuclear transport receptor or as an adapter-like protein in association with other importin subunits. The sequence is that of Importin beta-like SAD2 homolog from Arabidopsis thaliana (Mouse-ear cress).